A 442-amino-acid chain; its full sequence is Protein UNUSUAL FLORAL ORGANS (442 aa).

An interaction with SKP1A region spans residues 1-85; that stretch reads MDSTVFINNP…RFYSLLFSNT (85 aa). The F-box domain occupies 44 to 90; the sequence is GRIWSKLPPPLLDRVIAFLPPPAFFRTRCVCKRFYSLLFSNTFLETY.

Part of a putative SCF (ASK/Cullin/F-box) ubiquitin ligase complex. Interacts with SKP1A/ASK1, SKP1B/ASK2 and ASK11.

It localises to the nucleus. Its pathway is protein modification; protein ubiquitination. Component of SCF(ASK-cullin-F-box) E3 ubiquitin ligase complexes, which may mediate the ubiquitination and subsequent proteasomal degradation of target proteins. Considered as a meristem identity factor required for normal growth of the young floral meristem. Acts together with LEAFY to positively regulate the B class floral homeotic genes APETALA3 and PISTILLATA. In this way, operates as a region-specific regulator for petal and stamen development. Alternatively, may play a role as a negative regulator of the C class floral homeotic genes. Interacts together with the SKP1-like protein ASK1 to form a ubiquitin E3 ligase complex and could indirectly promote the ubiquitination and degradation of specific proteins controlling the floral primordia development like repressors of B class floral homeotic genes. This is Protein UNUSUAL FLORAL ORGANS (UFO) from Arabidopsis thaliana (Mouse-ear cress).